We begin with the raw amino-acid sequence, 153 residues long: Facilitator of iron transport 2 (153 aa).

The signal sequence occupies residues 1–18 (MKFSTIFGATTVMTAVSA). The interval 73 to 98 (TEGPDTTSEKSTTKTLTLTNGSGSST) is disordered. Low complexity predominate over residues 85 to 98 (TKTLTLTNGSGSST). Asparagine 92 carries N-linked (GlcNAc...) asparagine glycosylation. Residue glycine 130 is the site of GPI-anchor amidated glycine attachment. Positions 131 to 153 (AAPAAFQGASVGALALGLISYLL) are cleaved as a propeptide — removed in mature form.

The GPI-anchor is attached to the protein in the endoplasmic reticulum and serves to target the protein to the cell surface. There, the glucosamine-inositol phospholipid moiety is cleaved off and the GPI-modified mannoprotein is covalently attached via its lipidless GPI glycan remnant to the 1,6-beta-glucan of the outer cell wall layer.

Its subcellular location is the secreted. The protein resides in the cell wall. The protein localises to the membrane. Its function is as follows. Involved in the uptake of non-siderophore and siderophore sources of iron. Has a role in the retention of iron in the cell wall and periplasmic space. The chain is Facilitator of iron transport 2 (FIT2) from Saccharomyces cerevisiae (strain ATCC 204508 / S288c) (Baker's yeast).